The primary structure comprises 124 residues: MRHYEIVFIVHPDQSEQVPAMIDRYKATLAAVGGKIHRMEDWGRRQMAYMIDKLAKAHYVCMNIECDQKTLEELEHAFKFNDAVLRHLIIKTKKAETEPSIMMKEVQHEEARKSAQSDAPVAAA.

Residues 105 to 115 show a composition bias toward basic and acidic residues; sequence EVQHEEARKSA. The disordered stretch occupies residues 105 to 124; the sequence is EVQHEEARKSAQSDAPVAAA.

This sequence belongs to the bacterial ribosomal protein bS6 family.

Binds together with bS18 to 16S ribosomal RNA. The chain is Small ribosomal subunit protein bS6 from Polynucleobacter necessarius subsp. necessarius (strain STIR1).